Here is a 594-residue protein sequence, read N- to C-terminus: A-type ATP synthase subunit A (594 aa).

236–243 (GPFGSGKT) contributes to the ATP binding site.

It belongs to the ATPase alpha/beta chains family. In terms of assembly, has multiple subunits with at least A(3), B(3), C, D, E, F, H, I and proteolipid K(x).

The protein resides in the cell membrane. The enzyme catalyses ATP + H2O + 4 H(+)(in) = ADP + phosphate + 5 H(+)(out). In terms of biological role, component of the A-type ATP synthase that produces ATP from ADP in the presence of a proton gradient across the membrane. The A chain is the catalytic subunit. The protein is A-type ATP synthase subunit A of Pyrobaculum neutrophilum (strain DSM 2338 / JCM 9278 / NBRC 100436 / V24Sta) (Thermoproteus neutrophilus).